Here is a 1827-residue protein sequence, read N- to C-terminus: Sucrase-isomaltase, intestinal (1827 aa).

The Cytoplasmic segment spans residues 2-12 (ARKKFSGLEIS). Ser7 bears the Phosphoserine; by PKA mark. A helical; Signal-anchor for type II membrane protein transmembrane segment spans residues 13 to 32 (LIVLFVIVTIIAIALIVVLA). Topologically, residues 33–1827 (TKTPAVDEIS…LEEPIEINWS (1795 aa)) are lumenal. The segment at 40-61 (EISDSTSTPATTRVTTNPSDSG) is disordered. Low complexity predominate over residues 45-55 (TSTPATTRVTT). Residues 61–110 (GKCPNVLNDPVNVRINCIPEQFPTEGICAQRGCCWRPWNDSLIPWCFFVD) enclose the P-type 1 domain. Cystine bridges form between Cys63–Cys94, Cys77–Cys93, and Cys88–Cys106. The N-linked (GlcNAc...) asparagine glycan is linked to Asn99. The segment at 110–1007 (DNHGYNVQDM…DLQLNTANAR (898 aa)) is isomaltase. Sulfotyrosine occurs at positions 237 and 239. Substrate-binding residues include Asp264 and Asp388. Tyr391 and Tyr400 each carry sulfotyrosine. 2 N-linked (GlcNAc...) asparagine glycosylation sites follow: Asn437 and Asn455. Asp505 acts as the Nucleophile; for isomaltase activity in catalysis. An intrachain disulfide couples Cys520 to Cys545. Substrate is bound at residue Arg588. The active-site For isomaltase activity is Asp604. An intrachain disulfide couples Cys635 to Cys646. Position 662 (His662) interacts with substrate. Tyr667, Tyr763, and Tyr765 each carry sulfotyrosine. N-linked (GlcNAc...) asparagine glycosylation is found at Asn823, Asn855, Asn904, and Asn926. A P-type 2 domain is found at 932-978 (NQIFSENERFNCYPDADLATEQKCTQRGCVWRTGSSLSKAPECYFPR). The tract at residues 1008–1827 (IKLPSDPIST…LEEPIEINWS (820 aa)) is sucrase. 4 N-linked (GlcNAc...) asparagine glycosylation sites follow: Asn1235, Asn1303, Asn1340, and Asn1354. Catalysis depends on Asp1394, which acts as the Nucleophile; for sucrase activity. Catalysis depends on Glu1397, which acts as the For sucrase activity. An N-linked (GlcNAc...) asparagine glycan is attached at Asn1403. Asp1500 functions as the Proton donor; for isomaltase activity in the catalytic mechanism. Residues Asn1535, Asn1572, Asn1675, Asn1748, Asn1763, and Asn1815 are each glycosylated (N-linked (GlcNAc...) asparagine).

It belongs to the glycosyl hydrolase 31 family. The resulting sucrase and isomaltase subunits stay associated with one another in a complex by non-covalent linkages. The precursor is proteolytically cleaved when exposed to pancreatic proteases in the intestinal lumen. In terms of processing, sulfated. As to expression, expressed in the poorly differentiated crypt cells of the small intestine as well as in the mature villous cells. Expressed at very low levels in the colon.

The protein resides in the apical cell membrane. The catalysed reaction is Hydrolysis of sucrose and maltose by an alpha-D-glucosidase-type action.. The enzyme catalyses Hydrolysis of (1-&gt;6)-alpha-D-glucosidic linkages in some oligosaccharides produced from starch and glycogen by alpha-amylase, and in isomaltose.. Plays an important role in the final stage of carbohydrate digestion. Isomaltase activity is specific for both alpha-1,4- and alpha-1,6-oligosaccharides. The protein is Sucrase-isomaltase, intestinal (SI) of Homo sapiens (Human).